A 699-amino-acid chain; its full sequence is tRNA 5-methylaminomethyl-2-thiouridine biosynthesis bifunctional protein MnmC (699 aa).

The interval 1–247 is tRNA (mnm(5)s(2)U34)-methyltransferase; sequence MPAVSRPLPP…KREMLCGEIA (247 aa). Positions 275–699 are FAD-dependent cmnm(5)s(2)U34 oxidoreductase; sequence IGAGLAGTSV…QPSPTTTETP (425 aa). Residues 675 to 699 are disordered; sequence RGNATLSTSSPNDDAQPSPTTTETP.

This sequence in the N-terminal section; belongs to the methyltransferase superfamily. tRNA (mnm(5)s(2)U34)-methyltransferase family. The protein in the C-terminal section; belongs to the DAO family. Requires FAD as cofactor.

The protein localises to the cytoplasm. It carries out the reaction 5-aminomethyl-2-thiouridine(34) in tRNA + S-adenosyl-L-methionine = 5-methylaminomethyl-2-thiouridine(34) in tRNA + S-adenosyl-L-homocysteine + H(+). In terms of biological role, catalyzes the last two steps in the biosynthesis of 5-methylaminomethyl-2-thiouridine (mnm(5)s(2)U) at the wobble position (U34) in tRNA. Catalyzes the FAD-dependent demodification of cmnm(5)s(2)U34 to nm(5)s(2)U34, followed by the transfer of a methyl group from S-adenosyl-L-methionine to nm(5)s(2)U34, to form mnm(5)s(2)U34. This chain is tRNA 5-methylaminomethyl-2-thiouridine biosynthesis bifunctional protein MnmC, found in Chromohalobacter salexigens (strain ATCC BAA-138 / DSM 3043 / CIP 106854 / NCIMB 13768 / 1H11).